Reading from the N-terminus, the 302-residue chain is Small ribosomal subunit biogenesis GTPase RsgA (302 aa).

The CP-type G domain occupies 69–229 (KNLLIRPKVA…VGDTPGFSKV (161 aa)). GTP-binding positions include 118-121 (NKID) and 172-180 (GPSGVGKSS). Residues C252, C257, H259, and C265 each contribute to the Zn(2+) site.

It belongs to the TRAFAC class YlqF/YawG GTPase family. RsgA subfamily. As to quaternary structure, monomer. Associates with 30S ribosomal subunit, binds 16S rRNA. Requires Zn(2+) as cofactor.

The protein resides in the cytoplasm. In terms of biological role, one of several proteins that assist in the late maturation steps of the functional core of the 30S ribosomal subunit. Helps release RbfA from mature subunits. May play a role in the assembly of ribosomal proteins into the subunit. Circularly permuted GTPase that catalyzes slow GTP hydrolysis, GTPase activity is stimulated by the 30S ribosomal subunit. This chain is Small ribosomal subunit biogenesis GTPase RsgA, found in Aquifex aeolicus (strain VF5).